The chain runs to 693 residues: UvrABC system protein B (693 aa).

The Helicase ATP-binding domain occupies 35 to 188 (ERINNGEKDV…DQLLRQFVGI (154 aa)). ATP is bound at residue 48-55 (GATGTGKS). Positions 101 to 124 (YYDYYQPEAYVPQTDTFIEKDSSV) match the Beta-hairpin motif. In terms of domain architecture, Helicase C-terminal spans 438 to 600 (QIDDLLGEIR…VDPTPLRKRI (163 aa)). Residues 612 to 634 (ADTKSLLESAGKGRSRGKAPVPV) are disordered. The 36-residue stretch at 648 to 683 (VDLIEQLTAQMHSAAGELQFELAARLRDEVGDLKKE) folds into the UVR domain.

It belongs to the UvrB family. Forms a heterotetramer with UvrA during the search for lesions. Interacts with UvrC in an incision complex.

It is found in the cytoplasm. Its function is as follows. The UvrABC repair system catalyzes the recognition and processing of DNA lesions. A damage recognition complex composed of 2 UvrA and 2 UvrB subunits scans DNA for abnormalities. Upon binding of the UvrA(2)B(2) complex to a putative damaged site, the DNA wraps around one UvrB monomer. DNA wrap is dependent on ATP binding by UvrB and probably causes local melting of the DNA helix, facilitating insertion of UvrB beta-hairpin between the DNA strands. Then UvrB probes one DNA strand for the presence of a lesion. If a lesion is found the UvrA subunits dissociate and the UvrB-DNA preincision complex is formed. This complex is subsequently bound by UvrC and the second UvrB is released. If no lesion is found, the DNA wraps around the other UvrB subunit that will check the other stand for damage. The polypeptide is UvrABC system protein B (Renibacterium salmoninarum (strain ATCC 33209 / DSM 20767 / JCM 11484 / NBRC 15589 / NCIMB 2235)).